We begin with the raw amino-acid sequence, 111 residues long: Class I hydrophobin 2 (111 aa).

The signal sequence occupies residues 1–21; that stretch reads MFSRVMFCTFLILPLLAAATA. Intrachain disulfides connect C30–C90, C37–C84, C38–C71, and C91–C104.

Belongs to the fungal hydrophobin family. As to quaternary structure, self-assembles to form functional amyloid fibrils called rodlets. Self-assembly into fibrillar rodlets occurs spontaneously at hydrophobic:hydrophilic interfaces and the rodlets further associate laterally to form amphipathic monolayers. Behavior depends on environmental conditions: (1) when the pH increases or in the presence of Ca(2+) ions, an assembled state, beta-sheet rich, is formed; (2) when the solvent polarity increases, the vhm2 shows an increased tendency to reach hydrophobic/hydrophilic interfaces, with no detectable conformational change; and (3) at high temperature, a reversible conformational change and reversible aggregation occur. The physical and chemical properties, both in solution and as a biofilm, are affected by polysaccharides that act as hydrophilic stabilizer.

It localises to the secreted. Its subcellular location is the cell wall. In terms of biological role, aerial growth, conidiation, and dispersal of filamentous fungi in the environment rely upon a capability of their secreting small amphipathic proteins called hydrophobins (HPBs) with low sequence identity. Class I can self-assemble into an outermost layer of rodlet bundles on aerial cell surfaces, conferring cellular hydrophobicity that supports fungal growth, development and dispersal; whereas Class II form highly ordered films at water-air interfaces through intermolecular interactions but contribute nothing to the rodlet structure. Vmh2 is a class I hydrophobin involved in biofilm formation and is essential for the maintenance of the surface hydrophobicity of the mycelium. Seems not to be involved in hyphal resistance against environmental stress. This Pleurotus ostreatus (strain PC15) (Oyster mushroom) protein is Class I hydrophobin 2.